The primary structure comprises 312 residues: Apolipoprotein E (312 aa).

The first 18 residues, Met-1–Ala-18, serve as a signal peptide directing secretion. 8 tandem repeats follow at residues Val-72–Gly-93, Pro-94–Gly-115, Ala-116–Gly-137, Gln-138–Met-159, Arg-160–Glu-181, Arg-182–Ala-203, Asn-204–Arg-225, and Gly-226–Glu-247. The interval Val-72–Glu-247 is 8 X 22 AA approximate tandem repeats. Residue Met-135 is modified to Methionine sulfoxide. Ser-139 carries the post-translational modification Phosphoserine. The interval His-150–Arg-160 is LDL and other lipoprotein receptors binding. The tract at residues His-150–Arg-160 is LDL receptor binding. Met-154–Arg-157 lines the heparin pocket. Positions Thr-202–Met-282 are lipid-binding and lipoprotein association. Position 221 to 228 (Ser-221 to Leu-228) interacts with heparin. A homooligomerization region spans residues Gln-258 to Gln-312. Residues Arg-270–Met-282 are specificity for association with VLDL.

The protein belongs to the apolipoprotein A1/A4/E family. In terms of assembly, homotetramer. May interact with ABCA1; functionally associated with ABCA1 in the biogenesis of HDLs. May interact with APP/A4 amyloid-beta peptide; the interaction is extremely stable in vitro but its physiological significance is unclear. May interact with MAPT. May interact with MAP2. In the cerebrospinal fluid, interacts with secreted SORL1. Interacts with PMEL; this allows the loading of PMEL luminal fragment on ILVs to induce fibril nucleation. APOE exists as multiple glycosylated and sialylated glycoforms within cells and in plasma. The extent of glycosylation and sialylation are tissue and context specific. Post-translationally, glycated in plasma VLDL. In terms of processing, phosphorylated by FAM20C in the extracellular medium.

It localises to the secreted. Its subcellular location is the extracellular space. It is found in the extracellular matrix. The protein resides in the extracellular vesicle. The protein localises to the endosome. It localises to the multivesicular body. In terms of biological role, APOE is an apolipoprotein, a protein associating with lipid particles, that mainly functions in lipoprotein-mediated lipid transport between organs via the plasma and interstitial fluids. APOE is a core component of plasma lipoproteins and is involved in their production, conversion and clearance. Apolipoproteins are amphipathic molecules that interact both with lipids of the lipoprotein particle core and the aqueous environment of the plasma. As such, APOE associates with chylomicrons, chylomicron remnants, very low density lipoproteins (VLDL) and intermediate density lipoproteins (IDL) but shows a preferential binding to high-density lipoproteins (HDL). It also binds a wide range of cellular receptors including the LDL receptor/LDLR, the LDL receptor-related proteins LRP1, LRP2 and LRP8 and the very low-density lipoprotein receptor/VLDLR that mediate the cellular uptake of the APOE-containing lipoprotein particles. Finally, APOE also has a heparin-binding activity and binds heparan-sulfate proteoglycans on the surface of cells, a property that supports the capture and the receptor-mediated uptake of APOE-containing lipoproteins by cells. A main function of APOE is to mediate lipoprotein clearance through the uptake of chylomicrons, VLDLs, and HDLs by hepatocytes. APOE is also involved in the biosynthesis by the liver of VLDLs as well as their uptake by peripheral tissues ensuring the delivery of triglycerides and energy storage in muscle, heart and adipose tissues. By participating in the lipoprotein-mediated distribution of lipids among tissues, APOE plays a critical role in plasma and tissues lipid homeostasis. APOE is also involved in two steps of reverse cholesterol transport, the HDLs-mediated transport of cholesterol from peripheral tissues to the liver, and thereby plays an important role in cholesterol homeostasis. First, it is functionally associated with ABCA1 in the biogenesis of HDLs in tissues. Second, it is enriched in circulating HDLs and mediates their uptake by hepatocytes. APOE also plays an important role in lipid transport in the central nervous system, regulating neuron survival and sprouting. This Rattus rattus (Black rat) protein is Apolipoprotein E (Apoe).